We begin with the raw amino-acid sequence, 107 residues long: Parvalbumin beta (107 aa).

Serine 1 bears the N-acetylserine mark. 2 consecutive EF-hand domains span residues 37–72 and 76–107; these read KSLD…FSPS and LTDA…MIKA. Ca(2+)-binding residues include aspartate 50, aspartate 52, serine 54, phenylalanine 56, glutamate 58, glutamate 61, aspartate 89, aspartate 91, aspartate 93, methionine 95, and glutamate 100.

This sequence belongs to the parvalbumin family.

In terms of biological role, in muscle, parvalbumin is thought to be involved in relaxation after contraction. It binds two calcium ions. The protein is Parvalbumin beta of Esox lucius (Northern pike).